The following is a 1189-amino-acid chain: Zinc finger CCCH domain-containing protein 6 (1189 aa).

A compositionally biased stretch (basic and acidic residues) spans 1–12 (MTDSEHAGHDRE). The disordered stretch occupies residues 1–105 (MTDSEHAGHD…HKKRTGFYRD (105 aa)). Over residues 13-28 (DGELEDGEIDDAGFEE) the composition is skewed to acidic residues. A coiled-coil region spans residues 27 to 73 (EEIQEKEAKENEKQKSEKAYRKSRKKHKKEREKKKSKRRKREKHKHN). The segment covering 29–46 (IQEKEAKENEKQKSEKAY) has biased composition (basic and acidic residues). Over residues 47–73 (RKSRKKHKKEREKKKSKRRKREKHKHN) the composition is skewed to basic residues. 3 consecutive C3H1-type zinc fingers follow at residues 273–299 (KGKQ…HDAE), 301–328 (EKRK…HNEF), and 329–352 (PCKF…HDDL). A coiled-coil region spans residues 353 to 385 (TKETKKLLDKVLNTDEELINEDERELEELRKRG). Disordered stretches follow at residues 451–530 (FYTS…GPQN), 630–659 (PPVV…PVPG), 676–755 (YQED…GNQV), 947–1026 (LEQF…PYAP), and 1051–1189 (PRDH…SPFC). Residues 461–478 (QFQGSSPHPQHIYSSGSS) show a composition bias toward low complexity. The span at 505-525 (AGPPGLPVPQSPPLPPGPPEI) shows a compositional bias: pro residues. Over residues 639-659 (HGSGSDGSSTRTGHGPLPVPG) the composition is skewed to low complexity. Over residues 718–741 (KTLQKQTETLRNQQQPSTELSTPT) the composition is skewed to polar residues. The segment covering 961 to 973 (GDPRLQKNFDPRL) has biased composition (basic and acidic residues). Low complexity-rich tracts occupy residues 1009–1020 (SGAGTSNSGSGA) and 1056–1069 (SSST…SSGE). The residue at position 1158 (S1158) is a Phosphoserine. A compositionally biased stretch (basic and acidic residues) spans 1164–1179 (DPGRETDDKSLKEVFK).

The sequence is that of Zinc finger CCCH domain-containing protein 6 (ZC3H6) from Homo sapiens (Human).